Reading from the N-terminus, the 517-residue chain is GMP synthase [glutamine-hydrolyzing] (517 aa).

The Glutamine amidotransferase type-1 domain occupies 9-199 (RILILDFGSQ…VLGVCGCERL (191 aa)). Residue C86 is the Nucleophile of the active site. Residues H173 and E175 contribute to the active site. Residues 200-392 (WTSESIIEDA…LGLPYNMLYR (193 aa)) enclose the GMPS ATP-PPase domain. 227-233 (SGGVDSS) serves as a coordination point for ATP.

In terms of assembly, homodimer.

It catalyses the reaction XMP + L-glutamine + ATP + H2O = GMP + L-glutamate + AMP + diphosphate + 2 H(+). Its pathway is purine metabolism; GMP biosynthesis; GMP from XMP (L-Gln route): step 1/1. Functionally, catalyzes the synthesis of GMP from XMP. In Vibrio campbellii (strain ATCC BAA-1116), this protein is GMP synthase [glutamine-hydrolyzing].